The following is a 306-amino-acid chain: tRNA N6-adenosine threonylcarbamoyltransferase (306 aa).

Residues H110 and H114 each coordinate Fe cation. Residues 132–136 (IASGK), D165, G178, D182, and N268 contribute to the substrate site. Position 292 (D292) interacts with Fe cation.

It belongs to the KAE1 / TsaD family. The cofactor is Fe(2+).

Its subcellular location is the cytoplasm. The catalysed reaction is L-threonylcarbamoyladenylate + adenosine(37) in tRNA = N(6)-L-threonylcarbamoyladenosine(37) in tRNA + AMP + H(+). Functionally, required for the formation of a threonylcarbamoyl group on adenosine at position 37 (t(6)A37) in tRNAs that read codons beginning with adenine. Is involved in the transfer of the threonylcarbamoyl moiety of threonylcarbamoyl-AMP (TC-AMP) to the N6 group of A37, together with TsaE and TsaB. TsaD likely plays a direct catalytic role in this reaction. The protein is tRNA N6-adenosine threonylcarbamoyltransferase of Malacoplasma penetrans (strain HF-2) (Mycoplasma penetrans).